Reading from the N-terminus, the 333-residue chain is MKMIGFEKPFKLEEGNLFKVYEQRKPTPENDDILVKVNSISVNPVDTKQRQMEVTQAPRVLGFDAIGTVEAIGPDVTLFSPGDVVFYAGSPNRQGSNATYQLVSEAIVAKAPHNISANEAVSLPLTGITAYETFFDTFKISTNPAENEGKSVLIINGAGGVGSIATQIAKRYGLTVITTASRQETTEWCEKMGADIVLNHKEDLVRQFKEIPLVDYIFCTYNTDLYYNTMIELIKPLGHITTIVAFNEDQDLNALKLKSITFTHEFMFARPIHRTPDMIKQHEYLEDITKNIESGHYQPTTTQVFEGLSPENLYQAHQLLEKQSMIGKLVINI.

The protein belongs to the zinc-containing alcohol dehydrogenase family. Quinone oxidoreductase subfamily.

In Staphylococcus aureus (strain COL), this protein is Zinc-type alcohol dehydrogenase-like protein SACOL2177.